The sequence spans 114 residues: Hydrogenase maturation factor HypA (114 aa).

His-2 provides a ligand contact to Ni(2+). Zn(2+) contacts are provided by Cys-73, Cys-76, Cys-90, and Cys-93.

This sequence belongs to the HypA/HybF family.

In terms of biological role, involved in the maturation of [NiFe] hydrogenases. Required for nickel insertion into the metal center of the hydrogenase. The chain is Hydrogenase maturation factor HypA from Chloroflexus aggregans (strain MD-66 / DSM 9485).